A 280-amino-acid polypeptide reads, in one-letter code: Beta carbonic anhydrase 4 (280 aa).

Position 2 is an N-acetylalanine (A2). Residues 47–76 (NVAAAKIKALTAELKELDSSNSDAIERIKT) are a coiled coil. Phosphothreonine is present on T57. Phosphoserine is present on S117. Residue C223 is modified to S-nitrosocysteine.

It belongs to the beta-class carbonic anhydrase family. Interacts with DTX56. Strongly expressed in aerial tissues including leaves, stems, flowers and siliques. Accumulates in both guard cells and mesophyll cells.

Its subcellular location is the cell membrane. The enzyme catalyses hydrogencarbonate + H(+) = CO2 + H2O. Its function is as follows. Reversible hydration of carbon dioxide. Together with BCA1, involved in the CO(2) signaling pathway which controls gas-exchange between plants and the atmosphere by modulating stomatal development and movements. Promotes water use efficiency. In Arabidopsis thaliana (Mouse-ear cress), this protein is Beta carbonic anhydrase 4.